The following is a 456-amino-acid chain: TGACG-sequence-specific DNA-binding protein TGA-2.1 (456 aa).

2 disordered regions span residues 1-41 (MASK…NTSR) and 115-170 (SASG…QKTL). 2 stretches are compositionally biased toward polar residues: residues 9–41 (GNRSGTTGMPSFISQIPVSNPMGTEANNTNTSR) and 125–141 (GESNMADSGSRTDTSTD). The span at 158-169 (DKSKEKVLDQKT) shows a compositional bias: basic and acidic residues. In terms of domain architecture, bZIP spans 166-229 (DQKTLRRLAQ…NIADQSNGVG (64 aa)). Positions 167 to 220 (QKTLRRLAQNREAARKSRLRKKAYVQQLENSRLKLSQLEQDLQRARQQGKYISN) form a coiled coil. The interval 168-188 (KTLRRLAQNREAARKSRLRKK) is basic motif. The interval 194–208 (LENSRLKLSQLEQDL) is leucine-zipper. Residues 233–450 (PLAFDAEYSR…RALSSLWLAR (218 aa)) enclose the DOG1 domain.

It belongs to the bZIP family. As to quaternary structure, can form heterodimer with TGA2.2.

Its subcellular location is the nucleus. Transcriptional activator that binds specifically to the DNA sequence 5'-TGACG-3'. Recognizes ocs elements like the as-1 motif of the cauliflower mosaic virus 35S promoter. Binding to the as-1-like cis elements mediate auxin- and salicylic acid-inducible transcription. The sequence is that of TGACG-sequence-specific DNA-binding protein TGA-2.1 (TGA21) from Nicotiana tabacum (Common tobacco).